The primary structure comprises 254 residues: Attacin-A (254 aa).

The first 18 residues, 1-18 (MFTYKLILGLVLVVSASA), serve as a signal peptide directing secretion. The propeptide occupies 19 to 62 (RYLVFEDLEGESYLVPNQAEDEQVLEGEPFYENAVQLASPRVRR).

It belongs to the attacin/sarcotoxin-2 family.

It is found in the secreted. In terms of biological role, hemolymph antibacterial protein. This chain is Attacin-A, found in Trichoplusia ni (Cabbage looper).